The following is a 348-amino-acid chain: Uroporphyrinogen decarboxylase (348 aa).

Substrate is bound by residues 28-32, Asp78, Tyr154, Thr209, and His325; that span reads RQAGR.

Belongs to the uroporphyrinogen decarboxylase family. In terms of assembly, homodimer.

The protein resides in the cytoplasm. The catalysed reaction is uroporphyrinogen III + 4 H(+) = coproporphyrinogen III + 4 CO2. Its pathway is porphyrin-containing compound metabolism; protoporphyrin-IX biosynthesis; coproporphyrinogen-III from 5-aminolevulinate: step 4/4. Its function is as follows. Catalyzes the decarboxylation of four acetate groups of uroporphyrinogen-III to yield coproporphyrinogen-III. The sequence is that of Uroporphyrinogen decarboxylase from Rhodopseudomonas palustris (strain BisB5).